The sequence spans 522 residues: Penicillin-sensitive carboxypeptidase A (522 aa).

Catalysis depends on serine 94, which acts as the Acyl-ester intermediate. Lysine 97 (proton acceptor) is an active-site residue. Residue serine 351 is part of the active site. Lysine 461 lines the substrate pocket.

Belongs to the peptidase S13 family.

It carries out the reaction Preferential cleavage: (Ac)2-L-Lys-D-Ala-|-D-Ala. Also transpeptidation of peptidyl-alanyl moieties that are N-acyl substituents of D-alanine.. Inhibited by penicillin G. Its function is as follows. Carboxypeptidase. This Dictyostelium discoideum (Social amoeba) protein is Penicillin-sensitive carboxypeptidase A (pscA).